The primary structure comprises 107 residues: U1-lycotoxin-Ls1b (107 aa).

The first 20 residues, 1-20, serve as a signal peptide directing secretion; it reads MMKVLVVVALLVTLISYSSG. Positions 21 to 41 are excised as a propeptide; the sequence is EGIDDLEADELLSLMANEQTR. Cystine bridges form between Cys44-Cys59, Cys51-Cys68, Cys58-Cys86, and Cys70-Cys84.

It belongs to the neurotoxin 19 (CSTX) family. 04 (U1-Lctx) subfamily. As to expression, expressed by the venom gland.

Its subcellular location is the secreted. The chain is U1-lycotoxin-Ls1b from Lycosa singoriensis (Wolf spider).